Reading from the N-terminus, the 395-residue chain is MKSWCKNLLAAGLSLAMLSACSSSDVEEEPVSELTAIQATVFPEVSWSASVGDGVGDYYSRLTPAVRYGKIFAADRYGAVMAFDEASGEQVWRKDFSEEFRDNALAKNKGARLAAGITAARNKLFIGGESGLLAALNAEDGQVLWHVIAGGELLSKPTVADDVVVVSTSSGSLEAYNVDTGAKLWVYDMQLPNLTLRGTGSAAYEAGGFFIGTADGKVAVVVKNNGQAAWEQAIYNPTGGNEFTRMADVDMTPLILGDNLYAVSYNGNLVSMELRTGRIIWTRKYSSFNELTTAGLSLFLVDDHSRIYSVDRRNGLELWSNSELVNRTLTSPEVYKDYLVVGDFEGYLHFIDRSTGSIVGRIQVDSSGLFSQPIVVDDKIYVQGRSGKLAVVTLP.

The first 20 residues, 1 to 20 (MKSWCKNLLAAGLSLAMLSA), serve as a signal peptide directing secretion. Cys21 is lipidated: N-palmitoyl cysteine. Residue Cys21 is the site of S-diacylglycerol cysteine attachment.

This sequence belongs to the BamB family. In terms of assembly, part of the Bam complex.

Its subcellular location is the cell outer membrane. Functionally, part of the outer membrane protein assembly complex, which is involved in assembly and insertion of beta-barrel proteins into the outer membrane. The sequence is that of Outer membrane protein assembly factor BamB from Shewanella oneidensis (strain ATCC 700550 / JCM 31522 / CIP 106686 / LMG 19005 / NCIMB 14063 / MR-1).